Reading from the N-terminus, the 262-residue chain is Nurim (262 aa).

Topologically, residues 1 to 4 are nuclear; that stretch reads MAPA. Residues 5 to 28 form a helical membrane-spanning segment; that stretch reads LLLVPAALASFILAFGTGVEFVRF. The Perinuclear space portion of the chain corresponds to 29 to 58; sequence TSLRPLLGGIPESGGPDARQGWLAALQDRS. Residues 59–80 form a helical membrane-spanning segment; that stretch reads ILAPLAWDLGLLLLFVGQHSLM. Residues 81–97 lie on the Nuclear side of the membrane; that stretch reads AAERVKAWTSRYFGVLQ. Residues 98–114 form a helical membrane-spanning segment; sequence RSLYVACTALALQLVMR. At 115–133 the chain is on the perinuclear space side; the sequence is YWEPIPKGPVLWEARAEPW. A helical transmembrane segment spans residues 134–164; sequence ATWVPLLCFVLHVISWLLIFSILLVFDYAEL. Over 165–191 the chain is Nuclear; sequence MGLKQVYYHVLGLGEPLALKSPRALRL. The chain crosses the membrane as a helical span at residues 192–210; it reads FSHLRHPVCVELLTVLWVV. Topologically, residues 211–216 are perinuclear space; it reads PTLGTD. A helical transmembrane segment spans residues 217 to 234; that stretch reads RLLLAFLLTLYLGLAHGL. The Nuclear portion of the chain corresponds to 235 to 262; sequence DQQDLRYLRAQLQRKLHLLSRPQDGEAE.

The protein belongs to the nurim family.

It is found in the nucleus inner membrane. This is Nurim (NRM) from Pan troglodytes (Chimpanzee).